The primary structure comprises 440 residues: Ferredoxin--NADP reductase (440 aa).

The region spanning 17–75 (SRVFVYEVVGMRQNEETDQTNYPIRKSGSVFIRVPYNRMNQEMQRITRLGGKIVSIQTV) is the CpcD-like domain. The tract at residues 93 to 142 (ASSETAKSEGNGKATPVKTDSGAKGFAKPPAEEQLKKKDNKGNTMTQAKA) is disordered. Over residues 122–133 (PAEEQLKKKDNK) the composition is skewed to basic and acidic residues. Residues 155–279 (NAPFIGKVIS…TGPVGKEMLL (125 aa)) enclose the FAD-binding FR-type domain. FAD is bound by residues 214–217 (RLYS), 235–237 (CVR), Y241, 253–255 (VCS), and T294. Residues S217 and R237 each contribute to the NADP(+) site. Residues T294, 330-331 (VP), 360-361 (SR), 370-374 (RMYIQ), 399-400 (GL), and E438 contribute to the NADP(+) site.

It belongs to the ferredoxin--NADP reductase type 1 family. FAD is required as a cofactor.

It localises to the cellular thylakoid membrane. The catalysed reaction is 2 reduced [2Fe-2S]-[ferredoxin] + NADP(+) + H(+) = 2 oxidized [2Fe-2S]-[ferredoxin] + NADPH. In Trichormus variabilis (strain ATCC 29413 / PCC 7937) (Anabaena variabilis), this protein is Ferredoxin--NADP reductase (petH).